The sequence spans 261 residues: Thiazole synthase (261 aa).

Lys-101 functions as the Schiff-base intermediate with DXP in the catalytic mechanism. 1-deoxy-D-xylulose 5-phosphate-binding positions include Gly-162, 188–189, and 210–211; these read AG and NT.

Belongs to the ThiG family. As to quaternary structure, homotetramer. Forms heterodimers with either ThiH or ThiS.

It is found in the cytoplasm. The enzyme catalyses [ThiS sulfur-carrier protein]-C-terminal-Gly-aminoethanethioate + 2-iminoacetate + 1-deoxy-D-xylulose 5-phosphate = [ThiS sulfur-carrier protein]-C-terminal Gly-Gly + 2-[(2R,5Z)-2-carboxy-4-methylthiazol-5(2H)-ylidene]ethyl phosphate + 2 H2O + H(+). It functions in the pathway cofactor biosynthesis; thiamine diphosphate biosynthesis. In terms of biological role, catalyzes the rearrangement of 1-deoxy-D-xylulose 5-phosphate (DXP) to produce the thiazole phosphate moiety of thiamine. Sulfur is provided by the thiocarboxylate moiety of the carrier protein ThiS. In vitro, sulfur can be provided by H(2)S. The chain is Thiazole synthase from Azoarcus sp. (strain BH72).